Consider the following 486-residue polypeptide: Cardiolipin synthase A (486 aa).

The next 2 helical transmembrane spans lie at 3–23 and 38–58; these read TVYT…IAGV and MAWL…YLAV. 2 consecutive PLD phosphodiesterase domains span residues 219–246 and 399–426; these read MDLR…VDPR and EGGL…DMRS. Active-site residues include histidine 224, lysine 226, aspartate 231, histidine 404, lysine 406, and aspartate 411.

Belongs to the phospholipase D family. Cardiolipin synthase subfamily. ClsA sub-subfamily.

The protein localises to the cell inner membrane. The enzyme catalyses 2 a 1,2-diacyl-sn-glycero-3-phospho-(1'-sn-glycerol) = a cardiolipin + glycerol. Functionally, catalyzes the reversible phosphatidyl group transfer from one phosphatidylglycerol molecule to another to form cardiolipin (CL) (diphosphatidylglycerol) and glycerol. This is Cardiolipin synthase A from Escherichia coli O157:H7 (strain EC4115 / EHEC).